The sequence spans 244 residues: 5-oxoprolinase subunit A (244 aa).

This sequence belongs to the LamB/PxpA family. In terms of assembly, forms a complex composed of PxpA, PxpB and PxpC.

It catalyses the reaction 5-oxo-L-proline + ATP + 2 H2O = L-glutamate + ADP + phosphate + H(+). Its function is as follows. Catalyzes the cleavage of 5-oxoproline to form L-glutamate coupled to the hydrolysis of ATP to ADP and inorganic phosphate. This chain is 5-oxoprolinase subunit A, found in Shigella dysenteriae serotype 1 (strain Sd197).